Reading from the N-terminus, the 400-residue chain is Large envelope protein (400 aa).

Met-1 bears the N-acetylmethionine mark. A lipid anchor (N-myristoyl glycine; by host) is attached at Gly-2. A pre-S1 region spans residues 2–119 (GGWSSKHRKG…PPLRDTHPQA (118 aa)). Positions 2-174 (GGWSSKHRKG…FTKTGDPASN (173 aa)) are pre-S. At 2–181 (GGWSSKHRKG…ASNMESTTSG (180 aa)) the chain is on the virion surface; in external conformation side. Topologically, residues 2–253 (GGWSSKHRKG…PGYRWMCLRR (252 aa)) are intravirion; in internal conformation. Residue Trp-4 is glycosylated (N-linked (GlcNAc...) asparagine). A disordered region spans residues 89-117 (PAAPPPASTNRQSGRQPTPISPPLRDTHP). Residues 96–106 (STNRQSGRQPT) are compositionally biased toward polar residues. A pre-S2 region spans residues 120–174 (MQWNSTAFHQALQDPRVRGLYFPAGGSSSGTVNPVPNTVSHISSIFTKTGDPASN). The chain crosses the membrane as a helical span at residues 182 to 202 (FLGPLLVLQAGFFLLTRILTI). The Intravirion; in external conformation segment spans residues 203–253 (PQSLDSWWTSLNFLGGAPGCIGQNSQSQTSNHSPTSCPPTCPGYRWMCLRR). A helical transmembrane segment spans residues 254-274 (FIIFLFILLLCLIFLLVLLDY). The Virion surface segment spans residues 275–348 (QGMLPVCPLL…WASVRFSWLS (74 aa)). N-linked (GlcNAc...) asparagine; by host glycosylation occurs at Asn-320. The helical transmembrane segment at 349–369 (LLVPFVQWFAGLSPTVWLSVI) threads the bilayer. Topologically, residues 370 to 375 (WMIWYW) are intravirion. A helical transmembrane segment spans residues 376–398 (GPSLYNILSPFLPLLPIFLCLWV). The Virion surface segment spans residues 399-400 (YI).

The protein belongs to the orthohepadnavirus major surface antigen family. In terms of assembly, in its internal form (Li-HBsAg), interacts with the capsid protein and with the isoform S. Interacts with host chaperone CANX. Associates with host chaperone CANX through its pre-S2 N glycan; this association may be essential for isoform M proper secretion. As to quaternary structure, interacts with isoform L. Interacts with the antigens of satellite virus HDV (HDVAgs); this interaction is required for encapsidation of HDV genomic RNA. In terms of processing, isoform M is N-terminally acetylated by host at a ratio of 90%, and N-glycosylated by host at the pre-S2 region. Post-translationally, myristoylated.

Its subcellular location is the virion membrane. The large envelope protein exists in two topological conformations, one which is termed 'external' or Le-HBsAg and the other 'internal' or Li-HBsAg. In its external conformation the protein attaches the virus to cell receptors and thereby initiating infection. This interaction determines the species specificity and liver tropism. This attachment induces virion internalization predominantly through caveolin-mediated endocytosis. The large envelope protein also assures fusion between virion membrane and endosomal membrane. In its internal conformation the protein plays a role in virion morphogenesis and mediates the contact with the nucleocapsid like a matrix protein. Its function is as follows. The middle envelope protein plays an important role in the budding of the virion. It is involved in the induction of budding in a nucleocapsid independent way. In this process the majority of envelope proteins bud to form subviral lipoprotein particles of 22 nm of diameter that do not contain a nucleocapsid. The polypeptide is Large envelope protein (Homo sapiens (Human)).